A 120-amino-acid chain; its full sequence is uncharacterized protein (120 aa).

The protein to M.jannaschii MJ1503.

This is an uncharacterized protein from Methanocaldococcus jannaschii (strain ATCC 43067 / DSM 2661 / JAL-1 / JCM 10045 / NBRC 100440) (Methanococcus jannaschii).